The chain runs to 121 residues: Large ribosomal subunit protein bL12 (121 aa).

This sequence belongs to the bacterial ribosomal protein bL12 family. As to quaternary structure, homodimer. Part of the ribosomal stalk of the 50S ribosomal subunit. Forms a multimeric L10(L12)X complex, where L10 forms an elongated spine to which 2 to 4 L12 dimers bind in a sequential fashion. Binds GTP-bound translation factors.

Functionally, forms part of the ribosomal stalk which helps the ribosome interact with GTP-bound translation factors. Is thus essential for accurate translation. This Pseudomonas fluorescens (strain Pf0-1) protein is Large ribosomal subunit protein bL12.